We begin with the raw amino-acid sequence, 798 residues long: MSFDPNLLHNNGHNGYPNGTSAALRETGVIEKLLTSYGFIQCSERQARLFFHCSQYNGNLQDLKVGDDVEFEVSSDRRTGKPIAIKLVKIKPEIHPEERMNGQVVCAVPHNLESKSPAAPGQSPTGSVCYERNGEVFYLTYTSEDVEGNVQLETGDKINFVIDNNKHTGAVSARNIMLLKKKQARCQGVVCAMKEAFGFIERGDVVKEIFFHYSEFKGDLETLQPGDDVEFTIKDRNGKEVATDVRLLPQGTVIFEDISIEHFEGTVTKVIPKVPSKNQNDPLPGRIKVDFVIPKELPFGDKDTKSKVTLLEGDHVRFNISTDRRDKLERATNIEVLSNTFQFTNEAREMGVIAAMRDGFGFIKCVDRDARMFFHFSEILDGNQLHIADEVEFTVVPDMLSAQRNHAIRIKKLPKGTVSFHSHSDHRFLGTVEKEATFSNPKTTSPNKGKDKEAEDGIIAYDDCGVKLTIAFQAKDVEGSTSPQIGDKVEFSISDKQRPGQQIATCVRLLGRNSNSKRLLGYVATLKDNFGFIETANHDKEIFFHYSEFSGDVDSLELGDMVEYSLSKGKGNKVSAEKVNKAHSVNGITEEANPTIYSGKVIRPLRGVDPTQIEYQGMIEIVEEGDMKGEVYPFGIVGMANKGDCLQKGESVKFQLCVLGQNAQTMAYNITPLRRATVECVKDQFGFINYEVGDSKKLFFHVKEVQDGVELQAGDEVEFSVILNQRTGKCSACNVWRVCEGPKAVAAPRPDRLVNRLKNITLDDASAPRLMVLRQPRGPDNSMGFGAERKIRQAGVID.

The CSD 1 domain occupies 26-87; sequence ETGVIEKLLT…RTGKPIAIKL (62 aa). At lysine 81 the chain carries N6-acetyllysine. Residue lysine 91 forms a Glycyl lysine isopeptide (Lys-Gly) (interchain with G-Cter in SUMO2) linkage. Position 123 is a phosphoserine (serine 123). One can recognise a CSD 2; truncated domain in the interval 136–179; the sequence is VFYLTYTSEDVEGNVQLETGDKINFVIDNNKHTGAVSARNIMLL. The 60-residue stretch at 186–245 folds into the CSD 3 domain; that stretch reads CQGVVCAMKEAFGFIERGDVVKEIFFHYSEFKGDLETLQPGDDVEFTIKDRNGKEVATDV. The residue at position 276 (serine 276) is a Phosphoserine. The CSD 4; truncated domain maps to 297 to 337; the sequence is LPFGDKDTKSKVTLLEGDHVRFNISTDRRDKLERATNIEVL. CSD domains follow at residues 349 to 410 and 447 to 507; these read EMGV…AIRI and NKGK…ATCV. Serine 514 is modified (phosphoserine). Residues 519-579 enclose the CSD 7 domain; it reads LLGYVATLKD…KGNKVSAEKV (61 aa). Serine 584 bears the Phosphoserine mark. 2 CSD domains span residues 610–670 and 674–735; these read PTQI…AYNI and RRAT…ACNV. Residues 748–789 form the SUZ-C domain; sequence PRPDRLVNRLKNITLDDASAPRLMVLRQPRGPDNSMGFGAER. Threonine 761 carries the post-translational modification Phosphothreonine.

This sequence belongs to the UNR family. In terms of assembly, component of a multi subunit autoregulatory ribonucleoprotein complex (ARC), at least composed of IGF2BP1, PABPC1 and CSDE1. Interacts with STRAP. Part of a complex associated with the FOS mCRD domain and consisting of PABPC1, PAIP1, HNRPD and SYNCRIP. The interaction with PABPC1 is direct and RNA-independent. Interacts with EIF4ENIF1/4E-T.

The protein localises to the cytoplasm. It localises to the stress granule. Its subcellular location is the P-body. Functionally, RNA-binding protein involved in translationally coupled mRNA turnover. Implicated with other RNA-binding proteins in the cytoplasmic deadenylation/translational and decay interplay of the FOS mRNA mediated by the major coding-region determinant of instability (mCRD) domain. Required for efficient formation of stress granules. The polypeptide is Cold shock domain-containing protein E1 (Mus musculus (Mouse)).